The sequence spans 216 residues: Large ribosomal subunit protein uL1 (216 aa).

Belongs to the universal ribosomal protein uL1 family. Component of the large ribosomal subunit.

It is found in the cytoplasm. Its function is as follows. Component of the large ribosomal subunit. The ribosome is a large ribonucleoprotein complex responsible for the synthesis of proteins in the cell. The protein is Large ribosomal subunit protein uL1 (rpl10a) of Danio rerio (Zebrafish).